The sequence spans 358 residues: UDP-N-acetylglucosamine--N-acetylmuramyl-(pentapeptide) pyrophosphoryl-undecaprenol N-acetylglucosamine transferase (358 aa).

Residues 11 to 13, Arg-163, Ser-191, Ile-245, and Gln-290 each bind UDP-N-acetyl-alpha-D-glucosamine; that span reads TGG.

Belongs to the glycosyltransferase 28 family. MurG subfamily.

The protein localises to the cell inner membrane. It catalyses the reaction di-trans,octa-cis-undecaprenyl diphospho-N-acetyl-alpha-D-muramoyl-L-alanyl-D-glutamyl-meso-2,6-diaminopimeloyl-D-alanyl-D-alanine + UDP-N-acetyl-alpha-D-glucosamine = di-trans,octa-cis-undecaprenyl diphospho-[N-acetyl-alpha-D-glucosaminyl-(1-&gt;4)]-N-acetyl-alpha-D-muramoyl-L-alanyl-D-glutamyl-meso-2,6-diaminopimeloyl-D-alanyl-D-alanine + UDP + H(+). Its pathway is cell wall biogenesis; peptidoglycan biosynthesis. In terms of biological role, cell wall formation. Catalyzes the transfer of a GlcNAc subunit on undecaprenyl-pyrophosphoryl-MurNAc-pentapeptide (lipid intermediate I) to form undecaprenyl-pyrophosphoryl-MurNAc-(pentapeptide)GlcNAc (lipid intermediate II). The sequence is that of UDP-N-acetylglucosamine--N-acetylmuramyl-(pentapeptide) pyrophosphoryl-undecaprenol N-acetylglucosamine transferase from Janthinobacterium sp. (strain Marseille) (Minibacterium massiliensis).